A 38-amino-acid polypeptide reads, in one-letter code: Photosystem II reaction center protein L (38 aa).

A helical transmembrane segment spans residues 17 to 37 (SLFWGLLLIFVLAILFSSYIF).

Belongs to the PsbL family. In terms of assembly, PSII is composed of 1 copy each of membrane proteins PsbA, PsbB, PsbC, PsbD, PsbE, PsbF, PsbH, PsbI, PsbJ, PsbK, PsbL, PsbM, PsbT, PsbX, PsbY, PsbZ, Psb30/Ycf12, at least 3 peripheral proteins of the oxygen-evolving complex and a large number of cofactors. It forms dimeric complexes.

The protein localises to the plastid. It localises to the cyanelle thylakoid membrane. One of the components of the core complex of photosystem II (PSII). PSII is a light-driven water:plastoquinone oxidoreductase that uses light energy to abstract electrons from H(2)O, generating O(2) and a proton gradient subsequently used for ATP formation. It consists of a core antenna complex that captures photons, and an electron transfer chain that converts photonic excitation into a charge separation. This subunit is found at the monomer-monomer interface and is required for correct PSII assembly and/or dimerization. The polypeptide is Photosystem II reaction center protein L (Cyanophora paradoxa).